A 176-amino-acid chain; its full sequence is bZIP transcription factor 8 (176 aa).

Positions 44 to 101 (PNTSGGSDESMSDGSKIDPKRSPKYLEKRMKNNEAAKKSRASRKHREQKNQTENELLK) are disordered. Low complexity predominate over residues 47–57 (SGGSDESMSDG). Residues 58–80 (SKIDPKRSPKYLEKRMKNNEAAK) are compositionally biased toward basic and acidic residues. Residues 65-128 (SPKYLEKRMK…AQMQITIRDM (64 aa)) form the bZIP domain. Residues 67 to 92 (KYLEKRMKNNEAAKKSRASRKHREQK) form a basic motif region. The span at 81-90 (KSRASRKHRE) shows a compositional bias: basic residues. Residues 91–101 (QKNQTENELLK) are compositionally biased toward basic and acidic residues. Residues 100 to 107 (LKRKNAAL) form a leucine-zipper region.

It belongs to the bZIP family.

This is bZIP transcription factor 8 (zip-8) from Caenorhabditis elegans.